The primary structure comprises 243 residues: 3-deoxy-manno-octulosonate cytidylyltransferase (243 aa).

The protein belongs to the KdsB family.

The protein resides in the cytoplasm. The enzyme catalyses 3-deoxy-alpha-D-manno-oct-2-ulosonate + CTP = CMP-3-deoxy-beta-D-manno-octulosonate + diphosphate. It participates in nucleotide-sugar biosynthesis; CMP-3-deoxy-D-manno-octulosonate biosynthesis; CMP-3-deoxy-D-manno-octulosonate from 3-deoxy-D-manno-octulosonate and CTP: step 1/1. The protein operates within bacterial outer membrane biogenesis; lipopolysaccharide biosynthesis. Its function is as follows. Activates KDO (a required 8-carbon sugar) for incorporation into bacterial lipopolysaccharide in Gram-negative bacteria. This chain is 3-deoxy-manno-octulosonate cytidylyltransferase, found in Bartonella henselae (strain ATCC 49882 / DSM 28221 / CCUG 30454 / Houston 1) (Rochalimaea henselae).